The primary structure comprises 136 residues: Sec-independent protein translocase protein TatB (136 aa).

The chain crosses the membrane as a helical span at residues 1–21 (MFDIGFPELALVAVIGLLVLG). Residues 89-136 (YEDMVEKNPATPMSSKASTPQTPSSGPDPQPVESHSHSDDASKQHDRS) form a disordered region. Positions 99–115 (TPMSSKASTPQTPSSGP) are enriched in polar residues. Basic and acidic residues predominate over residues 122–136 (SHSHSDDASKQHDRS).

The protein belongs to the TatB family. In terms of assembly, the Tat system comprises two distinct complexes: a TatABC complex, containing multiple copies of TatA, TatB and TatC subunits, and a separate TatA complex, containing only TatA subunits. Substrates initially bind to the TatABC complex, which probably triggers association of the separate TatA complex to form the active translocon.

It is found in the cell inner membrane. In terms of biological role, part of the twin-arginine translocation (Tat) system that transports large folded proteins containing a characteristic twin-arginine motif in their signal peptide across membranes. Together with TatC, TatB is part of a receptor directly interacting with Tat signal peptides. TatB may form an oligomeric binding site that transiently accommodates folded Tat precursor proteins before their translocation. This Hahella chejuensis (strain KCTC 2396) protein is Sec-independent protein translocase protein TatB.